Reading from the N-terminus, the 274-residue chain is NADPH-dependent 7-cyano-7-deazaguanine reductase (274 aa).

Val80–Ser82 is a binding site for substrate. Position 82–83 (Ser82–Lys83) interacts with NADPH. The Thioimide intermediate role is filled by Cys181. Asp188 serves as the catalytic Proton donor. His220–Glu221 lines the substrate pocket. Arg249–Gly250 contacts NADPH.

The protein belongs to the GTP cyclohydrolase I family. QueF type 2 subfamily. As to quaternary structure, homodimer.

It localises to the cytoplasm. The catalysed reaction is 7-aminomethyl-7-carbaguanine + 2 NADP(+) = 7-cyano-7-deazaguanine + 2 NADPH + 3 H(+). It functions in the pathway tRNA modification; tRNA-queuosine biosynthesis. Its function is as follows. Catalyzes the NADPH-dependent reduction of 7-cyano-7-deazaguanine (preQ0) to 7-aminomethyl-7-deazaguanine (preQ1). The protein is NADPH-dependent 7-cyano-7-deazaguanine reductase of Burkholderia ambifaria (strain ATCC BAA-244 / DSM 16087 / CCUG 44356 / LMG 19182 / AMMD) (Burkholderia cepacia (strain AMMD)).